A 71-amino-acid chain; its full sequence is Ribosome modulation factor (71 aa).

The protein belongs to the ribosome modulation factor family.

It is found in the cytoplasm. During stationary phase, converts 70S ribosomes to an inactive dimeric form (100S ribosomes). This is Ribosome modulation factor from Pseudomonas savastanoi pv. phaseolicola (strain 1448A / Race 6) (Pseudomonas syringae pv. phaseolicola (strain 1448A / Race 6)).